A 448-amino-acid polypeptide reads, in one-letter code: Solute carrier family 52, riboflavin transporter, member 3-A (448 aa).

The next 3 helical transmembrane spans lie at 11 to 31, 40 to 60, and 73 to 93; these read AFGL…PLIV, LPSY…LVTL, and LAIY…AVFW. The N-linked (GlcNAc...) asparagine glycan is linked to N94. The next 2 helical transmembrane spans lie at 107–127 and 138–158; these read AFFI…VTFL and ITTY…VALA. N168, N171, N175, and N194 each carry an N-linked (GlcNAc...) asparagine glycan. 6 consecutive transmembrane segments (helical) span residues 198 to 218, 280 to 300, 315 to 335, 339 to 359, 376 to 396, and 407 to 427; these read EIFF…FLIL, AFIY…LPSV, LSAA…MFFP, LVFL…NMAM, AIIV…KVMV, and ALVW…IIMF.

It belongs to the riboflavin transporter family.

It localises to the cell membrane. It carries out the reaction riboflavin(in) = riboflavin(out). In terms of biological role, plasma membrane transporter mediating the uptake by cells of the water soluble vitamin B2/riboflavin that plays a key role in biochemical oxidation-reduction reactions of the carbohydrate, lipid, and amino acid metabolism. This chain is Solute carrier family 52, riboflavin transporter, member 3-A (slc52a3a), found in Danio rerio (Zebrafish).